The chain runs to 288 residues: PAK4-inhibitor inka2 (288 aa).

The tract at residues 159–196 is inka box; the sequence is DPTDWTTSLLTRGRNRQPLVLGDNSFADLIKNWMDLPE.

Belongs to the INKA family.

It localises to the nucleus. Functionally, inhibitor of the serine/threonine-protein kinase pak4/pak5. Acts by binding pak4/pak5 in a substrate-like manner, inhibiting the protein kinase activity. The sequence is that of PAK4-inhibitor inka2 from Danio rerio (Zebrafish).